Reading from the N-terminus, the 372-residue chain is Hydrogenase-1 small chain (372 aa).

Residues 1-45 constitute a signal peptide (tat-type signal); that stretch reads MNNEETFYQAMRRQGVTRRSFLKYCSLAATSLGLGAGMAPKIAWA. Over 46–325 the chain is Periplasmic; it reads LENKPRIPVV…PQMGTHSTAD (280 aa). Positions 62, 65, 160, 194, 232, 235, 260, and 266 each coordinate [4Fe-4S] cluster. Positions 275, 294, and 297 each coordinate [3Fe-4S] cluster. A helical membrane pass occupies residues 326 to 346; the sequence is TVGLTALGVVAAAVGVHAVAS. Positions 346–372 are disordered; sequence SSVDQRRRHNQQPTETEHQPGNEDKQA. Residues 347–372 are Cytoplasmic-facing; sequence SVDQRRRHNQQPTETEHQPGNEDKQA. Residues 360 to 372 show a composition bias toward basic and acidic residues; that stretch reads ETEHQPGNEDKQA.

The protein belongs to the [NiFe]/[NiFeSe] hydrogenase small subunit family. As to quaternary structure, heterodimer of a large and a small subunit. [4Fe-4S] cluster serves as cofactor. The cofactor is [3Fe-4S] cluster. In terms of processing, predicted to be exported by the Tat system. The position of the signal peptide cleavage has not been experimentally proven.

The protein localises to the cell inner membrane. The catalysed reaction is H2 + A = AH2. This is one of three S.flexneri hydrogenases synthesized in response to different physiological conditions. HYD1 is believed to have a role in hydrogen cycling during fermentative growth. In Shigella flexneri, this protein is Hydrogenase-1 small chain (hyaA).